Consider the following 300-residue polypeptide: Formamidopyrimidine-DNA glycosylase (300 aa).

The active-site Schiff-base intermediate with DNA is Pro-2. Glu-3 serves as the catalytic Proton donor. Lys-60 acts as the Proton donor; for beta-elimination activity in catalysis. DNA is bound by residues His-108, Arg-136, and Arg-181. An FPG-type zinc finger spans residues 266–300 (WVYSRAGQPCRICNTPLEKIKLAGRSTHFCPQCQK). Arg-290 serves as the catalytic Proton donor; for delta-elimination activity.

The protein belongs to the FPG family. As to quaternary structure, monomer. Zn(2+) is required as a cofactor.

The catalysed reaction is Hydrolysis of DNA containing ring-opened 7-methylguanine residues, releasing 2,6-diamino-4-hydroxy-5-(N-methyl)formamidopyrimidine.. It carries out the reaction 2'-deoxyribonucleotide-(2'-deoxyribose 5'-phosphate)-2'-deoxyribonucleotide-DNA = a 3'-end 2'-deoxyribonucleotide-(2,3-dehydro-2,3-deoxyribose 5'-phosphate)-DNA + a 5'-end 5'-phospho-2'-deoxyribonucleoside-DNA + H(+). In terms of biological role, involved in base excision repair of DNA damaged by oxidation or by mutagenic agents. Acts as a DNA glycosylase that recognizes and removes damaged bases. Has a preference for oxidized purines, such as 7,8-dihydro-8-oxoguanine (8-oxoG). Has AP (apurinic/apyrimidinic) lyase activity and introduces nicks in the DNA strand. Cleaves the DNA backbone by beta-delta elimination to generate a single-strand break at the site of the removed base with both 3'- and 5'-phosphates. In Trichodesmium erythraeum (strain IMS101), this protein is Formamidopyrimidine-DNA glycosylase.